We begin with the raw amino-acid sequence, 648 residues long: Penicillin-binding protein PbpB (648 aa).

The tract at residues 1-35 (MSRRGDRPRTPAQPRKKARVDQPRSARTRRTRVSE) is disordered. A helical transmembrane segment spans residues 52-72 (GNLAILAVLVIAAVQLFMLQV). Residue Ser355 is the Acyl-ester intermediate of the active site.

This sequence belongs to the transpeptidase family. As to quaternary structure, interacts with Wag31.

The protein resides in the cell membrane. The sequence is that of Penicillin-binding protein PbpB (pbpB) from Mycolicibacterium smegmatis (strain ATCC 700084 / mc(2)155) (Mycobacterium smegmatis).